We begin with the raw amino-acid sequence, 369 residues long: mRNA cap guanine-N(7) methyltransferase 1 (369 aa).

The tract at residues 1–55 (MNKRPRDEPSSSFASAPKRQYGAGGGGYGGHGYSEERSSARRVADHYSARSNQTL) is disordered. The segment covering 22–32 (GAGGGGYGGHG) has biased composition (gly residues). Residues 33–48 (YSEERSSARRVADHYS) are compositionally biased toward basic and acidic residues. The mRNA cap 0 methyltransferase domain maps to 61–340 (SPIIHLKKLN…LYLAFVLRKR (280 aa)). An mRNA-binding site is contributed by 70–71 (NN). S-adenosyl-L-methionine-binding positions include K74, A92, D114, 149-150 (DC), and 171-173 (QFA).

It belongs to the class I-like SAM-binding methyltransferase superfamily. mRNA cap 0 methyltransferase family.

It localises to the nucleus. It catalyses the reaction a 5'-end (5'-triphosphoguanosine)-ribonucleoside in mRNA + S-adenosyl-L-methionine = a 5'-end (N(7)-methyl 5'-triphosphoguanosine)-ribonucleoside in mRNA + S-adenosyl-L-homocysteine. In terms of biological role, mRNA-capping methyltransferase that methylates the N7 position of the added guanosine to the 5'-cap structure of mRNAs. Binds RNA containing 5'-terminal GpppC. The sequence is that of mRNA cap guanine-N(7) methyltransferase 1 from Oryza sativa subsp. japonica (Rice).